The sequence spans 63 residues: Conotoxin Lt11.1 (63 aa).

The signal sequence occupies residues 1–23 (MMFRLTSVLLVIVLLNLVVLTNA). Cystine bridges form between Cys24–Cys34, Cys28–Cys39, Cys33–Cys42, and Cys38–Cys47. Positions 53 to 63 (ALLQRLLGHQR) are excised as a propeptide.

Belongs to the conotoxin I2 superfamily. As to expression, expressed by the venom duct.

The protein resides in the secreted. This chain is Conotoxin Lt11.1, found in Conus litteratus (Lettered cone).